The sequence spans 483 residues: Acetyltransferase AOL_s00215g273 (483 aa).

Helical transmembrane passes span 9–29 (ALIG…TSFV), 33–53 (IYPL…TEGL), 141–161 (VAYI…LYTC), 191–211 (IFQM…SVLV), 292–312 (FLVF…VYYG), 334–354 (VTGY…FICW), 372–392 (WFVG…VLWI), and 453–473 (LGGY…GSGF).

The protein belongs to the wax synthase family.

The protein resides in the membrane. Its pathway is secondary metabolite biosynthesis; terpenoid biosynthesis. Its function is as follows. Acetyltransferase; part of the gene cluster that mediates the biosynthesis of sesquiterpenyl epoxy-cyclohexenoids (SECs) such as anthrobotrisins and arthrosporols, metabolites that possess a novel hybrid carbon skeleton consisting of a polyketide-derived epoxycyclohexenol combined with a terpenoid-derived monocyclic sesquiterpenol substructure (PKS-PTS hybrid). The SEC pathway plays an important role for fungal soil colonization via decreasing fungal nematode-capturing ability. The role of the acetyltransferase in SEC biosynthesis has still to be determined. The pathway begins with the biosynthesis of 6-methylsalicylic acid (6-MSA), the first precursor of the polyketide-derived epoxycyclohexenol in arthrosporols, by the polyketide synthase (PKS) AOL_s00215g283 via condensation of 1 acetate and 3 malonate units. The 6-methylsalicylic acid decarboxylase AOL_s00215g281 then catalyzes the decarboxylation of 6-methylsalicylic acid to yield m-cresol. The cytochrome P450 monooxygenase AOL_s00215g282 further oxidizes m-cresol to yield toluquinol. With the assistance of the oxidoreductase AOL_s00215g277, the polyprenyl transferase AOL_s00215g276 catalyzes the farnesylation of toluquinol to produce farnesyl hydroquinone, the hybrid precursor for biosynthesis of SECs. Farnesyl hydroquinone undergoes epoxidation and then subsequent dehydrogenation to form farnesyl epoxy-quinone, the first and simplest SEC. The cytochrome P450 monooxygenase AOL_s00215g278 and the FAD-dependent monooxygenase AOL_s00215g279 might be involved in the oxygenation of the phenol moiety, most likely in the epoxy formation. The cytochrome P450 monooxygenases AOL_s00215g274 and AOL_s00215g280 are involved in specific regional ketone reductions at respectively C-4 and C-1 of farnesyl epoxy-quinone PubMed:33823587. The chain is Acetyltransferase AOL_s00215g273 from Arthrobotrys oligospora (strain ATCC 24927 / CBS 115.81 / DSM 1491) (Nematode-trapping fungus).